The sequence spans 571 residues: uncharacterized protein (571 aa).

3 disordered regions span residues 71-128, 142-258, and 298-336; these read TNHY…RVTA, NKND…PQNE, and LNRQ…TTKR. Over residues 88–113 the composition is skewed to polar residues; that stretch reads PNRSGVSSPVNDGASSPTQRGGTTPA. Pro residues predominate over residues 168-184; the sequence is RGYPGPGPRGYPGPGPR. The segment covering 205 to 215 has biased composition (low complexity); it reads QGPRRYSCPGP. The span at 217–234 shows a compositional bias: gly residues; it reads GYPGPGSSGRPDPGGGLQ. Residues 311–326 are compositionally biased toward low complexity; sequence PEKQQTPPPEETQNAQ.

This is an uncharacterized protein from Drosophila melanogaster (Fruit fly).